The primary structure comprises 369 residues: UDP-N-acetylglucosamine--N-acetylmuramyl-(pentapeptide) pyrophosphoryl-undecaprenol N-acetylglucosamine transferase (369 aa).

UDP-N-acetyl-alpha-D-glucosamine-binding positions include 16 to 18, Asn130, Arg171, Ser203, Ile253, and Gln298; that span reads TGG.

The protein belongs to the glycosyltransferase 28 family. MurG subfamily.

Its subcellular location is the cell inner membrane. The enzyme catalyses di-trans,octa-cis-undecaprenyl diphospho-N-acetyl-alpha-D-muramoyl-L-alanyl-D-glutamyl-meso-2,6-diaminopimeloyl-D-alanyl-D-alanine + UDP-N-acetyl-alpha-D-glucosamine = di-trans,octa-cis-undecaprenyl diphospho-[N-acetyl-alpha-D-glucosaminyl-(1-&gt;4)]-N-acetyl-alpha-D-muramoyl-L-alanyl-D-glutamyl-meso-2,6-diaminopimeloyl-D-alanyl-D-alanine + UDP + H(+). Its pathway is cell wall biogenesis; peptidoglycan biosynthesis. Cell wall formation. Catalyzes the transfer of a GlcNAc subunit on undecaprenyl-pyrophosphoryl-MurNAc-pentapeptide (lipid intermediate I) to form undecaprenyl-pyrophosphoryl-MurNAc-(pentapeptide)GlcNAc (lipid intermediate II). The polypeptide is UDP-N-acetylglucosamine--N-acetylmuramyl-(pentapeptide) pyrophosphoryl-undecaprenol N-acetylglucosamine transferase (Cytophaga hutchinsonii (strain ATCC 33406 / DSM 1761 / CIP 103989 / NBRC 15051 / NCIMB 9469 / D465)).